The primary structure comprises 459 residues: Cysteine--tRNA ligase (459 aa).

Cysteine 28 is a binding site for Zn(2+). Positions 30–40 match the 'HIGH' region motif; sequence VTIYDLCHIGH. Zn(2+)-binding residues include cysteine 209, histidine 234, and glutamate 238. The 'KMSKS' region signature appears at 266–270; it reads KMSKS. ATP is bound at residue lysine 269.

This sequence belongs to the class-I aminoacyl-tRNA synthetase family. In terms of assembly, monomer. Zn(2+) is required as a cofactor.

It is found in the cytoplasm. It carries out the reaction tRNA(Cys) + L-cysteine + ATP = L-cysteinyl-tRNA(Cys) + AMP + diphosphate. The polypeptide is Cysteine--tRNA ligase (Shewanella amazonensis (strain ATCC BAA-1098 / SB2B)).